Consider the following 243-residue polypeptide: HTH-type quorum sensing-dependent transcriptional regulator RpaR (243 aa).

The region spanning 174 to 239 (KPIRRNRLTP…AAVAKALTLG (66 aa)) is the HTH luxR-type domain. A DNA-binding region (H-T-H motif) is located at residues 198–217 (AWEISVILCITERTVKFHLI).

It belongs to the autoinducer-regulated transcriptional regulatory protein family.

In terms of biological role, responds to the quorum-sensing autoinducer 4-coumaroyl-homoserine lactone to regulate expression of several genes. Represses expression of rpaI in the absence of the inducer. This is HTH-type quorum sensing-dependent transcriptional regulator RpaR from Rhodopseudomonas palustris (strain ATCC BAA-98 / CGA009).